Here is a 32-residue protein sequence, read N- to C-terminus: MSDIN-like toxin proprotein a (32 aa).

Residues Met1–Pro10 constitute a propeptide that is removed on maturation. Positions Ile11 to Pro18 form a cross-link, cyclopeptide (Ile-Pro). A propeptide spanning residues Cys19 to Glu32 is cleaved from the precursor.

The protein belongs to the MSDIN fungal toxin family. Post-translationally, processed by the macrocyclase-peptidase enzyme POPB to yield a toxic cyclic octapeptide. POPB first removes 10 residues from the N-terminus. Conformational trapping of the remaining peptide forces the enzyme to release this intermediate rather than proceed to macrocyclization. The enzyme rebinds the remaining peptide in a different conformation and catalyzes macrocyclization of the N-terminal 8 residues.

Its function is as follows. Probable toxin that belongs to the MSDIN-like toxin family responsible for a large number of food poisoning cases and deaths. This chain is MSDIN-like toxin proprotein a, found in Amanita phalloides (Death cap).